The sequence spans 789 residues: SH3 domain-containing protein 19 (789 aa).

Disordered stretches follow at residues threonine 24–leucine 170, aspartate 209–proline 404, and threonine 472–proline 497. The residue at position 65 (serine 65) is a Phosphoserine. Basic and acidic residues predominate over residues serine 296–glutamate 305. Residues tryptophan 335–leucine 351 show a composition bias toward pro residues. Residues proline 352 to leucine 361 show a composition bias toward low complexity. Residue serine 368 is modified to Phosphoserine. SH3 domains follow at residues leucine 414–glutamate 476, serine 494–aspartate 553, alanine 570–aspartate 629, proline 660–alanine 719, and proline 729–valine 788. Over residues leucine 474–aspartate 484 the composition is skewed to basic and acidic residues. Residues alanine 635–glutamate 663 form a disordered region.

As to quaternary structure, interacts with ADAM12. Isoform 2 (but not isoform 1) interacts with ADAM9, ADAM10, ADAM15 and ADAM17. Interacts with SH3GL1 SH3 domain. Interacts via SH3 3 and SH3 4 or SH3 4 and SH3 5 domains with SOS2. Probably forms a trimeric complex with SH3GL1 and SOS2. Interacts with SH3YL1. Expressed in hair follicles.

It localises to the cytoplasm. May play a role in regulating A disintegrin and metalloproteases (ADAMs) in the signaling of EGFR-ligand shedding. May be involved in suppression of Ras-induced cellular transformation and Ras-mediated activation of ELK1. Plays a role in the regulation of cell morphology and cytoskeletal organization. The protein is SH3 domain-containing protein 19 (Sh3d19) of Mus musculus (Mouse).